Consider the following 97-residue polypeptide: Co-chaperonin GroES (97 aa).

This sequence belongs to the GroES chaperonin family. As to quaternary structure, heptamer of 7 subunits arranged in a ring. Interacts with the chaperonin GroEL.

It is found in the cytoplasm. In terms of biological role, together with the chaperonin GroEL, plays an essential role in assisting protein folding. The GroEL-GroES system forms a nano-cage that allows encapsulation of the non-native substrate proteins and provides a physical environment optimized to promote and accelerate protein folding. GroES binds to the apical surface of the GroEL ring, thereby capping the opening of the GroEL channel. The protein is Co-chaperonin GroES of Yersinia enterocolitica serotype O:8 / biotype 1B (strain NCTC 13174 / 8081).